The sequence spans 319 residues: Ribosomal RNA small subunit methyltransferase H (319 aa).

Residues 37–39, D57, F96, D105, and Q112 contribute to the S-adenosyl-L-methionine site; that span reads GGY. A compositionally biased stretch (basic and acidic residues) spans 292-302; it reads RPDEREKERNP. Positions 292-319 are disordered; it reads RPDEREKERNPRSRSARLRAVEKQGVPA.

This sequence belongs to the methyltransferase superfamily. RsmH family.

It localises to the cytoplasm. The enzyme catalyses cytidine(1402) in 16S rRNA + S-adenosyl-L-methionine = N(4)-methylcytidine(1402) in 16S rRNA + S-adenosyl-L-homocysteine + H(+). In terms of biological role, specifically methylates the N4 position of cytidine in position 1402 (C1402) of 16S rRNA. This chain is Ribosomal RNA small subunit methyltransferase H, found in Syntrophobacter fumaroxidans (strain DSM 10017 / MPOB).